Here is a 190-residue protein sequence, read N- to C-terminus: Corticoliberin (190 aa).

The first 24 residues, 1 to 24 (MRLRLLVSVGVLLVALLPSPPCRA), serve as a signal peptide directing secretion. Positions 25–147 (LLSRGPIPGA…QEAPAARKRR (123 aa)) are excised as a propeptide. 2 disordered regions span residues 33-57 (GARQASQHPQPLSFFQPPPQPQEPQ) and 116-151 (RRPFDSPAGPAERGTENALGSRQEAPAARKRRSQEP). Residue A188 is modified to Alanine amide.

The protein belongs to the sauvagine/corticotropin-releasing factor/urotensin I family. In terms of assembly, interacts (via C-terminus) with CRFR1 (via N-terminal extracellular domain). In terms of tissue distribution, produced by the hypothalamus.

It localises to the secreted. In terms of biological role, hormone regulating the release of corticotropin from pituitary gland. Induces NLRP6 in intestinal epithelial cells, hence may influence gut microbiota profile. The polypeptide is Corticoliberin (CRH) (Bos taurus (Bovine)).